The primary structure comprises 524 residues: Gamma-taxilin (524 aa).

Residues 1-10 (MATRLEEVTR) are compositionally biased toward basic and acidic residues. Disordered regions lie at residues 1 to 37 (MATR…KFEI) and 64 to 86 (LQHQ…DEGS). 2 positions are modified to omega-N-methylarginine: Arg12 and Arg24. Residues Ser79, Ser86, and Ser97 each carry the phosphoserine modification. Residues 106 to 115 (REEIPGREAR) show a composition bias toward basic and acidic residues. Residues 106 to 130 (REEIPGREARTGPPDGQQDSECSRN) are disordered. A coiled-coil region spans residues 153–465 (EEKLAALCKK…KEQVSIKAAD (313 aa)). At Tyr283 the chain carries Phosphotyrosine. The segment at 501–524 (VCEKSAAQKPSSSGSPAQGIESVD) is disordered. Position 512 is a phosphoserine (Ser512).

The protein belongs to the taxilin family. As to quaternary structure, binds to the C-terminal coiled coil region of syntaxin family members STX1A, STX3A and STX4A. Forms a heterodimer with ATF4 in osteoblasts.

It localises to the nucleus membrane. The protein localises to the cytoplasm. It is found in the cytosol. Functionally, may be involved in intracellular vesicle traffic. Inhibits ATF4-mediated transcription, possibly by dimerizing with ATF4 to form inactive dimers that cannot bind DNA. May be involved in regulating bone mass density through an ATF4-dependent pathway. May be involved in cell cycle progression. In Mus musculus (Mouse), this protein is Gamma-taxilin (Txlng).